We begin with the raw amino-acid sequence, 240 residues long: ATP-dependent dethiobiotin synthetase BioD (240 aa).

Residue 15–20 (EIGKTF) participates in ATP binding. Thr-19 is a binding site for Mg(2+). Lys-40 is a catalytic residue. Residues Asp-57, 118 to 121 (EGVG), and 178 to 179 (NR) contribute to the ATP site. Residues Asp-57 and Glu-118 each coordinate Mg(2+).

The protein belongs to the dethiobiotin synthetase family. Homodimer. The cofactor is Mg(2+).

It is found in the cytoplasm. The catalysed reaction is (7R,8S)-7,8-diammoniononanoate + CO2 + ATP = (4R,5S)-dethiobiotin + ADP + phosphate + 3 H(+). It functions in the pathway cofactor biosynthesis; biotin biosynthesis; biotin from 7,8-diaminononanoate: step 1/2. Its function is as follows. Catalyzes a mechanistically unusual reaction, the ATP-dependent insertion of CO2 between the N7 and N8 nitrogen atoms of 7,8-diaminopelargonic acid (DAPA, also called 7,8-diammoniononanoate) to form a ureido ring. In Burkholderia pseudomallei (strain K96243), this protein is ATP-dependent dethiobiotin synthetase BioD.